Here is a 92-residue protein sequence, read N- to C-terminus: RNA-binding protein Hfq (92 aa).

One can recognise a Sm domain in the interval 10–71 (DLFLNQLRKE…ISSIMPSKPI (62 aa)). The disordered stretch occupies residues 73–92 (YMAQAQNNQQASQQSNNNQG). The segment covering 75 to 92 (AQAQNNQQASQQSNNNQG) has biased composition (low complexity).

The protein belongs to the Hfq family. As to quaternary structure, homohexamer.

Its function is as follows. RNA chaperone that binds small regulatory RNA (sRNAs) and mRNAs to facilitate mRNA translational regulation in response to envelope stress, environmental stress and changes in metabolite concentrations. Also binds with high specificity to tRNAs. The sequence is that of RNA-binding protein Hfq from Caldicellulosiruptor bescii (strain ATCC BAA-1888 / DSM 6725 / KCTC 15123 / Z-1320) (Anaerocellum thermophilum).